The sequence spans 979 residues: UPF0182 protein MT0070 (979 aa).

Transmembrane regions (helical) follow at residues 19–41, 63–85, 114–136, 174–196, 208–230, 261–280, and 285–307; these read LVTAGMGMLALLLFGPRLVDIYV, LAIVAAVALVVAGIVLAALLLAY, LFGWGIAVTLGVVCGLIASFDWV, WLFVAVVLAFLASLLTHYLFGGL, AARVQLAVFAGAVVLLKAVAYWL, LVLVAIAVLCAVSFFTAIFL, and IPAMAAALLVLSAILVGGLWPLL. Residues 894–948 form a disordered region; it reads VFGPGTGRVATXPGGDAASAPPPGAGGPAPPQGVPPPRTTQPPAAPPRGPDVPPA. A compositionally biased stretch (pro residues) spans 913–946; that stretch reads APPPGAGGPAPPQGVPPPRTTQPPAAPPRGPDVP.

Belongs to the UPF0182 family.

The protein localises to the cell membrane. The chain is UPF0182 protein MT0070 from Mycobacterium tuberculosis (strain CDC 1551 / Oshkosh).